Here is a 708-residue protein sequence, read N- to C-terminus: Lactotransferrin (708 aa).

The first 19 residues, 1–19 (MKLLFLALLSLLALGPSLA), serve as a signal peptide directing secretion. 2 Transferrin-like domains span residues 25–352 (VRWC…NLKE) and 364–693 (VVWC…NLRQ). Disulfide bonds link Cys28/Cys64 and Cys38/Cys55. Residue Asp79 participates in Fe(3+) binding. Arg92 is a catalytic residue. Tyr111 contacts Fe(3+). Intrachain disulfides connect Cys134-Cys217, Cys176-Cys192, Cys179-Cys202, Cys189-Cys200, and Cys250-Cys264. Residue Thr136 coordinates hydrogencarbonate. An N-linked (GlcNAc...) asparagine glycan is attached at Asn139. 3 residues coordinate hydrogencarbonate: Arg140, Ala142, and Gly143. A Fe(3+)-binding site is contributed by Tyr211. His272 lines the Fe(3+) pocket. Catalysis depends on Ser278, which acts as the Nucleophile. Intrachain disulfides connect Cys367–Cys399 and Cys377–Cys390. Asn385 carries N-linked (GlcNAc...) asparagine glycosylation. Residues Asp414 and Asp452 each coordinate Fe(3+). Intrachain disulfides connect Cys476-Cys551, Cys510-Cys524, Cys521-Cys534, and Cys592-Cys606. Hydrogencarbonate-binding residues include Thr478, Arg482, Ala484, and Gly485. Asn495 carries an N-linked (GlcNAc...) asparagine glycan. Position 545 (Tyr545) interacts with Fe(3+). Position 614 (His614) interacts with Fe(3+).

Belongs to the transferrin family. In terms of assembly, monomer. Found in a complex with LTF, CLU, EPPIN and SEMG1. Interacts with prey activated coagulation factor X; the interaction inhibits coagulation factor X catalytic activity. Found in a complex with MPO and LTF; interacts directly with CP, allows Fe(3+) incorporation into LTF and activation of CP ferroxidase activity. N-glycosylated. Glycosylation is important for draculin anticoagulant activity. Probably also O-glycosylated. In terms of tissue distribution, expressed in the submaxillary gland and secreted in the saliva (at protein level).

The protein resides in the secreted. Transferrins are iron binding transport proteins which can bind two Fe(3+) ions in association with the binding of an anion, usually bicarbonate. Functionally, major iron-binding and multifunctional protein found in exocrine fluids such as breast milk and mucosal secretions. Has antimicrobial activity. Antimicrobial properties may include bacteriostasis, which is related to its ability to sequester free iron and thus inhibit microbial growth, as well as direct bactericidal properties leading to the release of lipopolysaccharides from the bacterial outer membrane. May have anabolic, differentiating and anti-apoptotic effects on osteoblasts and may also inhibit osteoclastogenesis, possibly playing a role in the regulation of bone growth. May interfere with the lipopolysaccharide (LPS)-stimulated TLR4 signaling. Its function is as follows. The lactotransferrin transferrin-like domain 1 functions as a serine protease of the peptidase S60 family that cuts arginine rich regions. This function contributes to the antimicrobial activity. Shows a preferential cleavage at -Arg-Ser-Arg-Arg-|- and -Arg-Arg-Ser-Arg-|-, and of Z-Phe-Arg-|-aminomethylcoumarin sites. In terms of biological role, acts as an anticoagulant of the blood coagulation cascade of the bat's prey by inhibiting coagulation factor IX and activated coagulation factor X. The polypeptide is Lactotransferrin (Desmodus rotundus (Vampire bat)).